A 154-amino-acid polypeptide reads, in one-letter code: MEDLLNEVVPQEDLERFEKKYHHELELDGEVTTDTKFEYAFCLVRSRYTNDVRKGIMILEELARTHPDGRRDYIYYLAFGNARIKEYTSGLKYCRAFLDIESNDQVRSLEEYIKKEIDKEVAKGMVVAGGAALVLGGILGLGIAMARNKQKREK.

Residues 1-124 are Cytoplasmic-facing; it reads MEDLLNEVVP…KEIDKEVAKG (124 aa). Residues 125-145 traverse the membrane as a helical segment; it reads MVVAGGAALVLGGILGLGIAM. Topologically, residues 146-154 are mitochondrial intermembrane; that stretch reads ARNKQKREK.

Belongs to the FIS1 family.

It is found in the mitochondrion outer membrane. Its function is as follows. Involved in the fragmentation of the mitochondrial network and its perinuclear clustering. Functions downstream of Pink1 and upstream of Drp1 to regulate mitochondrial fission. The sequence is that of Mitochondrial fission 1 protein from Drosophila melanogaster (Fruit fly).